A 433-amino-acid chain; its full sequence is Cyclin-dependent kinase F-3 (433 aa).

The Protein kinase domain maps to Tyr4 to Phe283. ATP-binding positions include Ile10–Val18 and Lys33. Asp125 acts as the Proton acceptor in catalysis. Position 151 is a phosphoserine (Ser151). Thr156 bears the Phosphothreonine mark.

The protein belongs to the protein kinase superfamily. CMGC Ser/Thr protein kinase family. CDC2/CDKX subfamily.

It carries out the reaction L-seryl-[protein] + ATP = O-phospho-L-seryl-[protein] + ADP + H(+). The catalysed reaction is L-threonyl-[protein] + ATP = O-phospho-L-threonyl-[protein] + ADP + H(+). The enzyme catalyses [DNA-directed RNA polymerase] + ATP = phospho-[DNA-directed RNA polymerase] + ADP + H(+). The sequence is that of Cyclin-dependent kinase F-3 (CDKF-3) from Oryza sativa subsp. japonica (Rice).